The following is a 282-amino-acid chain: Shikimate dehydrogenase (NADP(+)) (282 aa).

Residues 15–17 and Thr-62 contribute to the shikimate site; that span reads SKS. Lys-66 (proton acceptor) is an active-site residue. Asn-87 and Asp-103 together coordinate shikimate. NADP(+)-binding positions include 128-132, 152-157, and Met-216; these read GAGGA and NRTPAK. Position 218 (Tyr-218) interacts with shikimate. Gly-240 is a binding site for NADP(+).

The protein belongs to the shikimate dehydrogenase family. Homodimer.

It catalyses the reaction shikimate + NADP(+) = 3-dehydroshikimate + NADPH + H(+). It functions in the pathway metabolic intermediate biosynthesis; chorismate biosynthesis; chorismate from D-erythrose 4-phosphate and phosphoenolpyruvate: step 4/7. In terms of biological role, involved in the biosynthesis of the chorismate, which leads to the biosynthesis of aromatic amino acids. Catalyzes the reversible NADPH linked reduction of 3-dehydroshikimate (DHSA) to yield shikimate (SA). This is Shikimate dehydrogenase (NADP(+)) from Nitrosococcus oceani (strain ATCC 19707 / BCRC 17464 / JCM 30415 / NCIMB 11848 / C-107).